The following is a 316-amino-acid chain: ATP synthase gamma chain (316 aa).

This sequence belongs to the ATPase gamma chain family. F-type ATPases have 2 components, CF(1) - the catalytic core - and CF(0) - the membrane proton channel. CF(1) has five subunits: alpha(3), beta(3), gamma(1), delta(1), epsilon(1). CF(0) has three main subunits: a, b and c.

The protein localises to the cellular thylakoid membrane. Functionally, produces ATP from ADP in the presence of a proton gradient across the membrane. The gamma chain is believed to be important in regulating ATPase activity and the flow of protons through the CF(0) complex. The chain is ATP synthase gamma chain from Prochlorococcus marinus (strain MIT 9313).